Reading from the N-terminus, the 179-residue chain is UPF0227 protein VS_2073 (179 aa).

Belongs to the UPF0227 family.

This chain is UPF0227 protein VS_2073, found in Vibrio atlanticus (strain LGP32) (Vibrio splendidus (strain Mel32)).